The chain runs to 285 residues: HTH-type transcriptional regulator YofA (285 aa).

The region spanning 1 to 58 (MESGDLKIFQAVAREGSITKAAQMLNYVQSNVTARVHNLEEDLNIRLFHRTNRGMKLT) is the HTH lysR-type domain. A DNA-binding region (H-T-H motif) is located at residues 18-37 (ITKAAQMLNYVQSNVTARVH).

It belongs to the LysR transcriptional regulatory family.

It localises to the cytoplasm. Regulates expression of the cell division protein ftsW, and is essential for cell viability during stationary phase. This is HTH-type transcriptional regulator YofA (yofA) from Bacillus subtilis (strain 168).